The sequence spans 419 residues: MRNSNRGPAFLILFATLMAAAGDGVSIVAFPWLVLQREGSAGQASIVASATMLPLLFATLVAGTAVDYFGRRRVSMVADALSGAAVAGVPLVAWGYGGDAVNVLVLAVLAALAAAFGPAGMTARDSMLPEAAARAGWSLDRINGAYEAILNLAFIVGPAIGGLMIATVGGITTMWITATAFGLSILAIAALQLEGAGKPHHTSRPQGLVSGIAEGLRFVWNLRVLRTLGMIDLTVTALYLPMESVLFPKYFTDHQQPVQLGWALMAIAGGGLVGALGYAVLAIRVPRRVTMSTAVLTLGLASMVIAFLPPLPVIMVLCAVVGLVYGPIQPIYNYVIQTRAAQHLRGRVVGVMTSLAYAAGPLGLLLAGPLTDAAGLHATFLALALPIVCTGLVAIRLPALRELDLAPQADIDRPVGSAQ.

The next 12 helical transmembrane spans lie at 7–29 (GPAF…SIVA), 44–66 (ASIV…GTAV), 73–95 (RVSM…VAWG), 100–122 (AVNV…AGMT), 149–171 (ILNL…VGGI), 175–197 (WITA…EGAG), 218–240 (FVWN…ALYL), 260–282 (LGWA…AVLA), 289–308 (VTMS…IAFL), 313–335 (VIMV…YNYV), 348–370 (VVGV…AGPL), and 375–397 (GLHA…AIRL).

This sequence belongs to the major facilitator superfamily. Drug:H(+) antiporter-3 (DHA3) (TC 2.A.1.21) family.

It is found in the cell inner membrane. With respect to regulation, inhibited by piperine, verapamil and verapamil analogs. In terms of biological role, efflux pump that contributes to intrinsic antibiotic resistance. The pump uses the electrochemical gradient as a source of energy. Confers resistance to rifampicin. Confers low-level resistance to tetracycline and to several aminoglycosides, including streptomycin, gentamicin, 2'-N-ethylnetilmicin and 6'-N-ethylnetilmicin. This Mycobacterium tuberculosis (strain ATCC 25618 / H37Rv) protein is Multidrug efflux pump Tap.